Here is a 608-residue protein sequence, read N- to C-terminus: Preterminal protein (608 aa).

The short motif at 338 to 347 (RLPMRRRRRR) is the Nuclear localization signal element. The interval 342–377 (RRRRRRAPPPPPMSEELSEPEVEAFPPASPPRRSFE) is disordered. S536 is subject to O-(5'-phospho-DNA)-serine.

Belongs to the adenoviridae terminal protein family. In terms of assembly, heterodimer with the polymerase; this heterodimer binds to bp 9 to 18 of the genome. Interacts with host POU2F1; POU2F1 binds to the auxiliary sequences in the inverted terminal repeats and tethers the pTP-POL heterodimer to the origin DNA thereby participating in the assembly of the pre-initiation complex (POL-TP-DBP-NFIA-POU2F1). Preterminal protein is used to replicate viral genome, upon genomic encapsidation it is processed first into iTP and finally into TP by adenovirus protease.

It localises to the host nucleus matrix. In terms of biological role, protein covalently bound to the viral DNA that acts as a primer for viral genomic replication by DNA strand displacement. Assembles on the viral origin of replication in an initiation complex with viral polymerase, DBP, host NFIA and host POU2F1/OCT1. During initiation, the polymerase covalently couples the first dCTP with Ser-580 of pTP. The terminal protein stimulates the template activity over 20 fold compared to protein-free templates. Neo-synthesized viral genomes are linked to two preterminal proteins, one for each 5' end. These new genomes are encapsidated in the nucleus, and during capsid maturation by viral protease, preterminal protein is first cleaved into intermediary (iTP), then into mature TP. May play a role in host nuclear matrix localization of genomic DNA. This is Preterminal protein from Canine adenovirus serotype 1 (strain CLL) (CAdV-1).